A 247-amino-acid polypeptide reads, in one-letter code: tRNA pseudouridine synthase A (247 aa).

Residue D53 is the Nucleophile of the active site. A substrate-binding site is contributed by Y112.

The protein belongs to the tRNA pseudouridine synthase TruA family. In terms of assembly, homodimer.

The catalysed reaction is uridine(38/39/40) in tRNA = pseudouridine(38/39/40) in tRNA. Its function is as follows. Formation of pseudouridine at positions 38, 39 and 40 in the anticodon stem and loop of transfer RNAs. The sequence is that of tRNA pseudouridine synthase A from Anaplasma marginale (strain St. Maries).